The following is a 432-amino-acid chain: Nuclear pore complex-interacting protein family member B9 (432 aa).

2 disordered regions span residues Arg-260–Ser-280 and Ser-353–Arg-420. Polar residues predominate over residues Gln-270–Ser-280. Positions Glu-374 to Glu-402 are enriched in basic and acidic residues. Basic residues predominate over residues Lys-408–Arg-420.

It belongs to the NPIP family.

This Homo sapiens (Human) protein is Nuclear pore complex-interacting protein family member B9 (NPIPB9).